We begin with the raw amino-acid sequence, 199 residues long: Recombination protein RecR (199 aa).

Residues C56 to C71 form a C4-type zinc finger. Positions A79–P174 constitute a Toprim domain.

The protein belongs to the RecR family.

Its function is as follows. May play a role in DNA repair. It seems to be involved in an RecBC-independent recombinational process of DNA repair. It may act with RecF and RecO. The protein is Recombination protein RecR of Clavibacter michiganensis subsp. michiganensis (strain NCPPB 382).